Consider the following 452-residue polypeptide: Nuclear distribution protein nudF 2 (452 aa).

Positions 76 to 101 (ALQILDLESKVAGLQAELSSLTLTSR) form a coiled coil. WD repeat units follow at residues 123 to 164 (SHRD…RTLK), 166 to 206 (HIRA…ANIR), 210 to 250 (GHDH…CVKV), 253 to 292 (SSDA…QKSA), 295 to 355 (GHEN…IKTL), 357 to 396 (GHDN…KLVK), and 401 to 449 (AHSH…SCVR).

This sequence belongs to the WD repeat LIS1/nudF family. In terms of assembly, self-associates. Interacts with nudE and dynein.

It is found in the cytoplasm. The protein localises to the cytoskeleton. Its subcellular location is the spindle pole. Its function is as follows. Positively regulates the activity of the minus-end directed microtubule motor protein dynein. May enhance dynein-mediated microtubule sliding by targeting dynein to the microtubule plus end. Required for nuclear migration during vegetative growth as well as development. Required for retrograde early endosome (EE) transport from the hyphal tip. Required for localization of dynein to the mitotic spindle poles. Recruits additional proteins to the dynein complex at SPBs. The chain is Nuclear distribution protein nudF 2 from Talaromyces marneffei (strain ATCC 18224 / CBS 334.59 / QM 7333) (Penicillium marneffei).